The following is a 205-amino-acid chain: Troponin I, cardiac muscle (205 aa).

The tract at residues M1–A38 is disordered. An N-acetylalanine modification is found at A2. Residue S5 is modified to Phosphoserine. Phosphoserine; by PKA and PKD/PRKD1 occurs at positions 17 and 18. Y21 is subject to Phosphotyrosine. The residue at position 26 (T26) is a Phosphothreonine; by STK4/MST1. The interval E27–R74 is involved in binding TNC. Phosphoserine; by PKC/PRKCE is present on residues S37 and S39. Residue T46 is modified to Phosphothreonine; by STK4/MST1. The residue at position 72 (S72) is a Phosphoserine. The residue at position 73 (T73) is a Phosphothreonine. The interval N124–S145 is involved in binding TNC and actin. T138 is subject to Phosphothreonine; by STK4/MST1. S145 bears the Phosphoserine; by PAK3 mark. T176 carries the phosphothreonine modification. S194 carries the phosphoserine modification.

Belongs to the troponin I family. As to quaternary structure, binds to actin and tropomyosin. Interacts with TRIM63. Interacts with STK4/MST1. In terms of processing, phosphorylated at Ser-17 and Ser-18 by PRKD1; phosphorylation reduces myofilament calcium sensitivity. Phosphorylated preferentially at Thr-26. Phosphorylation by STK4/MST1 alters its binding affinity to TNNC1 (cardiac Tn-C) and TNNT2 (cardiac Tn-T). Phosphorylated at Ser-37 and Ser-39 by PRKCE; phosphorylation increases myocardium contractile dysfunction.

In terms of biological role, troponin I is the inhibitory subunit of troponin, the thin filament regulatory complex which confers calcium-sensitivity to striated muscle actomyosin ATPase activity. This chain is Troponin I, cardiac muscle (TNNI3), found in Equus caballus (Horse).